The primary structure comprises 267 residues: Stomatin-3 (267 aa).

Residues 17–37 traverse the membrane as a helical segment; sequence FVALICAWAFLLLTFPVSIFF.

This sequence belongs to the band 7/mec-2 family.

It localises to the membrane. This Caenorhabditis elegans protein is Stomatin-3 (sto-3).